We begin with the raw amino-acid sequence, 184 residues long: GTP-binding protein Rheb (184 aa).

Lys8 participates in a covalent cross-link: Glycyl lysine isopeptide (Lys-Gly) (interchain with G-Cter in ubiquitin). GDP is bound by residues Ser16, Val17, Gly18, Lys19, Ser20, Ser21, Val32, and Asp33. GTP contacts are provided by Ser16, Val17, Gly18, Lys19, Ser20, Ser21, Val32, Asp33, Tyr35, Pro37, Thr38, Gly63, Asn119, Lys120, and Asp122. Ser20 is a binding site for Mg(2+). Residues 35–43 carry the Effector region motif; that stretch reads YDPTIENTF. Thr38 lines the Mg(2+) pocket. Asn119 provides a ligand contact to GDP. A GDP-binding site is contributed by Asp122. Ser130 carries the phosphoserine; by MAPKAPK5 modification. A GDP-binding site is contributed by Ala150. Ala150 contributes to the GTP binding site. Cys181 bears the Cysteine methyl ester mark. Cys181 is lipidated: S-farnesyl cysteine. The propeptide at 182 to 184 is removed in mature form; the sequence is SVM.

This sequence belongs to the small GTPase superfamily. Rheb family. Associates with the mTORC1 complex (MTOR, MLST8 and RPTOR) in a guanyl nucleotide-independent manner. Interacts with TSC2. Interacts with MCRS1; the interaction maintains RHEB at the lysosome in its active GTP-bound form and prevents its interaction with the mTORC1 complex inhibitor TSC2, ensuring activation of the mTORC1 complex by RHEB. Interacts (when prenylated) with PDE6D; this promotes release from membranes. In terms of processing, farnesylation is important for efficiently activating mTORC1-mediated signaling. Polyubiquitinated in response to amino acid, promoting its interaction with MTOR and mTORC1 activation. Deubiquitination by ATXN3 promotes recruitment of the TSC-TBC complex and RHEB inactivation by TSC2. Monoubiquitinated at Lys-8 by RNF152, promoting its association with the TSC-TBC complex. Deubiquitinated at Lys-8 by USP4, promoting mTORC1 activation. Post-translationally, phosphorylation by MAPKAPK5 impairs GTP-binding and inactivation.

The protein localises to the endomembrane system. The protein resides in the lysosome membrane. Its subcellular location is the golgi apparatus membrane. It localises to the endoplasmic reticulum membrane. It is found in the cytoplasm. The protein localises to the cytosol. The catalysed reaction is GTP + H2O = GDP + phosphate + H(+). With respect to regulation, alternates between an inactive form bound to GDP and an active form bound to GTP. Inactivated by the TSC-TBC complex via the GTPase activating protein (GAP) domain of TSC2. Autoinhibited by Tyr-35, which constrains the active site conformation, restricting the access of the catalytic Asp-65 to the nucleotide-binding pocket. In terms of biological role, small GTPase that acts as an allosteric activator of the canonical mTORC1 complex, an evolutionarily conserved central nutrient sensor that stimulates anabolic reactions and macromolecule biosynthesis to promote cellular biomass generation and growth. In response to nutrients, growth factors or amino acids, specifically activates the protein kinase activity of MTOR, the catalytic component of the mTORC1 complex: acts by causing a conformational change that allows the alignment of residues in the active site of MTOR, thereby enhancing the phosphorylation of ribosomal protein S6 kinase (RPS6KB1 and RPS6KB2) and EIF4EBP1 (4E-BP1). RHEB is also required for localization of the TSC-TBC complex to lysosomal membranes. In response to starvation, RHEB is inactivated by the TSC-TBC complex, preventing activation of mTORC1. Has low intrinsic GTPase activity. This chain is GTP-binding protein Rheb, found in Mus musculus (Mouse).